Consider the following 1044-residue polypeptide: Probable pre-mRNA-splicing factor ATP-dependent RNA helicase DEAH6 (1044 aa).

Disordered regions lie at residues 99–134 (EADH…SEQL) and 152–211 (RRKV…VRRD). Residues 157–167 (EDEDDGTESEE) are compositionally biased toward acidic residues. Residues 168-211 (ERLRDQREREELEQHLRERDTARTRKLTEPKMSKKEQEEFVRRD) are compositionally biased toward basic and acidic residues. The 164-residue stretch at 414-577 (LNAVKDHQVL…FDQAPIFRFP (164 aa)) folds into the Helicase ATP-binding domain. Position 427–434 (427–434 (GETGSGKT)) interacts with ATP. Positions 524–527 (DEAH) match the DEAH box motif. The Helicase C-terminal domain maps to 599 to 775 (AITTVLTIHV…SVVLSLKSLG (177 aa)).

Belongs to the DEAD box helicase family. DEAH subfamily. PRP2 sub-subfamily. Predominantly expressed in flowers.

It carries out the reaction ATP + H2O = ADP + phosphate + H(+). In terms of biological role, may be involved in pre-mRNA splicing. The protein is Probable pre-mRNA-splicing factor ATP-dependent RNA helicase DEAH6 of Arabidopsis thaliana (Mouse-ear cress).